The chain runs to 248 residues: ATP synthase subunit a, chloroplastic (248 aa).

5 helical membrane passes run 38–58 (QVLL…TIAV), 96–116 (VPFI…GALL), 135–155 (INTT…AGLT), 200–220 (LVVA…VMFL), and 221–241 (GLFT…AYIG).

It belongs to the ATPase A chain family. As to quaternary structure, F-type ATPases have 2 components, CF(1) - the catalytic core - and CF(0) - the membrane proton channel. CF(1) has five subunits: alpha(3), beta(3), gamma(1), delta(1), epsilon(1). CF(0) has four main subunits: a, b, b' and c.

It localises to the plastid. It is found in the chloroplast thylakoid membrane. Key component of the proton channel; it plays a direct role in the translocation of protons across the membrane. The protein is ATP synthase subunit a, chloroplastic of Pinus thunbergii (Japanese black pine).